We begin with the raw amino-acid sequence, 397 residues long: Keratinocyte differentiation factor 1 (397 aa).

Positions methionine 1–leucine 16 are enriched in pro residues. Disordered regions lie at residues methionine 1–proline 67, glutamate 130–serine 158, and leucine 192–glutamate 214. A compositionally biased stretch (basic and acidic residues) spans arginine 44–proline 55. Residues serine 201–arginine 211 show a composition bias toward polar residues. Residue serine 218 is modified to Phosphoserine. Disordered regions lie at residues isoleucine 304–glycine 339 and alanine 361–leucine 392. A compositionally biased stretch (low complexity) spans alanine 321 to proline 330. Residues serine 375 to serine 388 are compositionally biased toward polar residues.

Its subcellular location is the cytoplasm. It is found in the cell junction. Functionally, plays a role in the regulation of the epidermis formation during early development. Required both as an inhibitor of basal cell proliferation and a promoter of differentiation of basal progenitor cell progeny. The polypeptide is Keratinocyte differentiation factor 1 (Kdf1) (Mus musculus (Mouse)).